A 100-amino-acid polypeptide reads, in one-letter code: Urease subunit gamma (100 aa).

It belongs to the urease gamma subunit family. As to quaternary structure, heterotrimer of UreA (gamma), UreB (beta) and UreC (alpha) subunits. Three heterotrimers associate to form the active enzyme.

The protein localises to the cytoplasm. It carries out the reaction urea + 2 H2O + H(+) = hydrogencarbonate + 2 NH4(+). It functions in the pathway nitrogen metabolism; urea degradation; CO(2) and NH(3) from urea (urease route): step 1/1. The protein is Urease subunit gamma of Mesorhizobium japonicum (strain LMG 29417 / CECT 9101 / MAFF 303099) (Mesorhizobium loti (strain MAFF 303099)).